Reading from the N-terminus, the 158-residue chain is Small ribosomal subunit protein uS7c (158 aa).

Belongs to the universal ribosomal protein uS7 family. As to quaternary structure, part of the 30S ribosomal subunit.

The protein localises to the plastid. The protein resides in the chloroplast. One of the primary rRNA binding proteins, it binds directly to 16S rRNA where it nucleates assembly of the head domain of the 30S subunit. This is Small ribosomal subunit protein uS7c (rps7) from Trieres chinensis (Marine centric diatom).